The primary structure comprises 477 residues: Putative BTB/POZ domain-containing protein R830 (477 aa).

Residues Ser-13–Pro-83 form the BTB domain.

The protein belongs to the mimivirus BTB/WD family.

The sequence is that of Putative BTB/POZ domain-containing protein R830 from Acanthamoeba polyphaga mimivirus (APMV).